We begin with the raw amino-acid sequence, 132 residues long: MVMTDPIADFLTRIRNANMVYHDKVEVPASKVKRAIAEIFKNEGYVKDVEYVEDNKQGLLRIYLKFGPNREKVITGVKRISKPGLRVYARKEEIPKVLGGLGVAVLSTSQGIMSDKAARKAGLGGEVLCYIW.

This sequence belongs to the universal ribosomal protein uS8 family. Part of the 30S ribosomal subunit. Contacts proteins S5 and S12.

Functionally, one of the primary rRNA binding proteins, it binds directly to 16S rRNA central domain where it helps coordinate assembly of the platform of the 30S subunit. The protein is Small ribosomal subunit protein uS8 of Heliobacterium modesticaldum (strain ATCC 51547 / Ice1).